Consider the following 472-residue polypeptide: FAD-dependent monooxygenase dpmaE (472 aa).

The N-terminal stretch at 1-24 is a signal peptide; the sequence is MSQRQFKVIIIGGSVTGLTLAHSL. Residues Glu35, Gly49, and Arg108 each contribute to the FAD site. N-linked (GlcNAc...) asparagine glycosylation is found at Asn128 and Asn179. Positions 305 and 318 each coordinate FAD. N-linked (GlcNAc...) asparagine glycosylation is present at Asn369. Residues 440–460 form a helical membrane-spanning segment; it reads LLPLMFTLPLLYFGLSWIVGI.

It belongs to the paxM FAD-dependent monooxygenase family. It depends on FAD as a cofactor.

The protein localises to the membrane. It participates in secondary metabolite biosynthesis; terpenoid biosynthesis. Functionally, FAD-dependent monooxygenase; part of the gene cluster that mediates the biosynthesis of the diterpenoid pyrones subglutinols A and B. The first step of the pathway is the synthesis of the alpha-pyrone moiety by the polyketide synthase dpmaA via condensation of one acetyl-CoA starter unit with 3 malonyl-CoA units and 2 methylations. The alpha-pyrone is then combined with geranylgeranyl pyrophosphate (GGPP) formed by the GGPP synthase dpmaD through the action of the prenyltransferase dpmaC to yield a linear alpha-pyrone diterpenoid. Subsequent steps in the diterpenoid pyrone biosynthetic pathway involve the decalin core formation, which is initiated by the epoxidation of the C10-C11 olefin by the FAD-dependent oxidoreductase dpmaE, and is followed by a cyclization cascade catalyzed by the terpene cyclase dpmaB. The dehydrogenase dpmaF is then involved in tetrahydrofuran (THF) ring formation at the C5 unit to complete the formation of subglutinols A and B. This Metarhizium anisopliae (Entomophthora anisopliae) protein is FAD-dependent monooxygenase dpmaE.